Here is a 175-residue protein sequence, read N- to C-terminus: Alpha-crystallin B chain (175 aa).

Met1 is modified (N-acetylmethionine). Residue Ser19 is modified to Phosphoserine. Ser41 carries O-linked (GlcNAc) serine glycosylation. Ser45 and Ser59 each carry phosphoserine. Residues 56–164 (RAPSWIDTGL…PERTIPITRE (109 aa)) enclose the sHSP domain. A Zn(2+)-binding site is contributed by His83. N6-acetyllysine is present on Lys92. The Zn(2+) site is built by His104, Glu106, His111, and His119. The interval 142–175 (VLTVNGPRRQASGPERTIPITREEKPAVTAAPKK) is disordered. Lys166 bears the N6-acetyllysine mark. Thr170 carries O-linked (GlcNAc) threonine glycosylation.

Belongs to the small heat shock protein (HSP20) family. In terms of assembly, heteromer composed of three CRYAA and one CRYAB subunits. Aggregates with homologous proteins, including the small heat shock protein HSPB1, to form large heteromeric complexes. Inter-subunit bridging via zinc ions enhances stability, which is crucial as there is no protein turn over in the lens. Interacts with HSPBAP1 and TTN/titin. Interacts with TMEM109; in the cellular response to DNA damage. Interacts with DES; binds rapidly during early stages of DES filament assembly and a reduced binding seen in the later stages. Interacts with TMED10; the interaction mediates the translocation from the cytoplasm into the ERGIC (endoplasmic reticulum-Golgi intermediate compartment) and thereby secretion. Interacts with ATP6V1A and with MTOR, forming a ternary complex.

The protein resides in the cytoplasm. Its subcellular location is the nucleus. It is found in the secreted. The protein localises to the lysosome. May contribute to the transparency and refractive index of the lens. Has chaperone-like activity, preventing aggregation of various proteins under a wide range of stress conditions. In lens epithelial cells, stabilizes the ATP6V1A protein, preventing its degradation by the proteasome. In Sus scrofa (Pig), this protein is Alpha-crystallin B chain (CRYAB).